The primary structure comprises 199 residues: Adenosylcobinamide-GDP ribazoletransferase (199 aa).

2 helical membrane passes run 2-22 and 61-81; these read LAGG…VFAV and IAAV…VAAL.

The protein belongs to the CobS family. It depends on Mg(2+) as a cofactor.

Its subcellular location is the cell membrane. It catalyses the reaction alpha-ribazole + adenosylcob(III)inamide-GDP = adenosylcob(III)alamin + GMP + H(+). It carries out the reaction alpha-ribazole 5'-phosphate + adenosylcob(III)inamide-GDP = adenosylcob(III)alamin 5'-phosphate + GMP + H(+). It participates in cofactor biosynthesis; adenosylcobalamin biosynthesis; adenosylcobalamin from cob(II)yrinate a,c-diamide: step 7/7. In terms of biological role, joins adenosylcobinamide-GDP and alpha-ribazole to generate adenosylcobalamin (Ado-cobalamin). Also synthesizes adenosylcobalamin 5'-phosphate from adenosylcobinamide-GDP and alpha-ribazole 5'-phosphate. The polypeptide is Adenosylcobinamide-GDP ribazoletransferase (Halobacterium salinarum (strain ATCC 700922 / JCM 11081 / NRC-1) (Halobacterium halobium)).